The following is a 185-amino-acid chain: Ribosome-recycling factor (185 aa).

The tract at residues 140-168 (KKEQKDGNITEDEQRNLEKQVQKITDDST) is disordered.

Belongs to the RRF family.

It localises to the cytoplasm. Responsible for the release of ribosomes from messenger RNA at the termination of protein biosynthesis. May increase the efficiency of translation by recycling ribosomes from one round of translation to another. This chain is Ribosome-recycling factor, found in Lactobacillus helveticus (strain DPC 4571).